An 804-amino-acid polypeptide reads, in one-letter code: Leucine--tRNA ligase (804 aa).

The 'HIGH' region motif lies at 39–50 (PYPSGAGLHVGH). Residues 580–584 (KMSKS) carry the 'KMSKS' region motif. ATP is bound at residue K583.

It belongs to the class-I aminoacyl-tRNA synthetase family.

Its subcellular location is the cytoplasm. The enzyme catalyses tRNA(Leu) + L-leucine + ATP = L-leucyl-tRNA(Leu) + AMP + diphosphate. The protein is Leucine--tRNA ligase of Mycoplasma capricolum subsp. capricolum (strain California kid / ATCC 27343 / NCTC 10154).